A 127-amino-acid polypeptide reads, in one-letter code: Protein E7 (127 aa).

Residues valine 2–proline 56 form an E7 terminal domain region. A disordered region spans residues proline 33–lysine 66. A zinc finger lies at cysteine 82–cysteine 118. Positions leucine 100–asparagine 108 match the Nuclear export signal motif.

It belongs to the papillomaviridae E7 protein family. As to quaternary structure, homodimer. Homooligomer. Interacts with host RB1; this interaction induces dissociation of RB1-E2F1 complex thereby disrupting RB1 activity. Interacts with host EP300; this interaction represses EP300 transcriptional activity. Interacts with protein E2; this interaction inhibits E7 oncogenic activity. Interacts with host TMEM173/STING; this interaction impairs the ability of TMEM173/STING to sense cytosolic DNA and promote the production of type I interferon (IFN-alpha and IFN-beta). Post-translationally, highly phosphorylated.

The protein localises to the host cytoplasm. It is found in the host nucleus. Functionally, plays a role in viral genome replication by driving entry of quiescent cells into the cell cycle. Stimulation of progression from G1 to S phase allows the virus to efficiently use the cellular DNA replicating machinery to achieve viral genome replication. E7 protein has both transforming and trans-activating activities. Induces the disassembly of the E2F1 transcription factor from RB1, with subsequent transcriptional activation of E2F1-regulated S-phase genes. Interferes with host histone deacetylation mediated by HDAC1 and HDAC2, leading to transcription activation. Also plays a role in the inhibition of both antiviral and antiproliferative functions of host interferon alpha. Interaction with host TMEM173/STING impairs the ability of TMEM173/STING to sense cytosolic DNA and promote the production of type I interferon (IFN-alpha and IFN-beta). The sequence is that of Protein E7 from Bos taurus (Bovine).